We begin with the raw amino-acid sequence, 118 residues long: MNEHNLLIFCLKDNVSISEYTEMIDWAYKNIQSETVVEITENQIIEYQNRGLWRLVSEITDNWLFGPSEGDWLIDKESILAVKEKLQNSDFSTEPLVKNIIHVLEYAIKNEKTVIFHF.

It belongs to the DMP12-like protein family. In terms of assembly, monomer. Interacts with the dimeric form of the DNA-binding protein HU.

Acts as a DNA mimic. Interacts with the DNA-binding protein HU and partially prevents the binding of HU protein to DNA by occupying the DNA binding sites on the protein. However, the relatively weak affinity of DMP12 for HU suggests that it may not completely block the HU protein-DNA binding, and that DMP12 is more likely to act as a regulator than a competitive inhibitor. It protects HU protein from limited digestion by trypsin in a limited trypsin digestion assay, suggesting that it may serve to protect the HU protein and improve the stability of unbound HU protein. The protein is DNA mimic protein DMP12 of Neisseria meningitidis serogroup B (strain ATCC BAA-335 / MC58).